A 450-amino-acid chain; its full sequence is Ceramide glucosyltransferase (450 aa).

The Lumenal portion of the chain corresponds to methionine 1 to serine 8. A helical transmembrane segment spans residues leucine 9–glycine 29. Residues tryptophan 30–alanine 337 lie on the Cytoplasmic side of the membrane. Residue aspartate 96 is a short sequence motif, D1. Position 148 (aspartate 148) is a short sequence motif, D2. Aspartate 286 is a short sequence motif (D3). Aspartate 286 (proton acceptor) is an active-site residue. A (Q/R)XXRW motif is present at residues arginine 323–tryptophan 327. Residues alanine 338–isoleucine 358 form a helical membrane-spanning segment. Residues serine 359 to leucine 361 are Lumenal-facing. Residues leucine 362–isoleucine 382 traverse the membrane as a helical segment. Topologically, residues serine 383–lysine 401 are cytoplasmic. Residues valine 402–alanine 422 form a helical membrane-spanning segment. Over methionine 423 to asparagine 450 the chain is Lumenal.

This sequence belongs to the glycosyltransferase 2 family.

It localises to the golgi apparatus membrane. The enzyme catalyses an N-acylsphing-4-enine + UDP-alpha-D-glucose = a beta-D-glucosyl-(1&lt;-&gt;1')-N-acylsphing-4-enine + UDP + H(+). It functions in the pathway lipid metabolism; sphingolipid metabolism. In terms of biological role, catalyzes the final step in the biosynthesis of the membrane lipid glucosylceramide (GluCer), the transfer of glucose to ceramide. Glucosylceramides play important roles in growth, differentiation and pathogenicity. Essential factor in determining the success of fungal infection by regulating survival of yeast cells during the initial colonization of the host lung. The protein is Ceramide glucosyltransferase of Cryptococcus neoformans var. grubii serotype A (strain H99 / ATCC 208821 / CBS 10515 / FGSC 9487) (Filobasidiella neoformans var. grubii).